A 579-amino-acid polypeptide reads, in one-letter code: Transcription factor COE2 (579 aa).

Positions 63-66 are interaction with DNA; the sequence is RKSN. The C5-type zinc finger occupies 149–168; that stretch reads CRVLLTHEVMCSRCCEKKSC. Interaction with DNA regions lie at residues 195 to 202 and 234 to 237; these read NCLKTAGN and NNSK. Positions 260-343 constitute an IPT/TIG domain; sequence PCIKAISPSE…KGAPGRFIYT (84 aa). 3 disordered regions span residues 442 to 482, 514 to 533, and 549 to 579; these read GVSI…YGSN, AIMP…LPFS, and LRPQ…VPPM. Polar residues predominate over residues 449-459; the sequence is GQTSGQGYTRN. Low complexity-rich tracts occupy residues 460–472 and 521–533; these read SSSL…PSSS and PGSS…LPFS.

This sequence belongs to the COE family.

It is found in the nucleus. In Danio rerio (Zebrafish), this protein is Transcription factor COE2 (coe2).